The sequence spans 393 residues: S-adenosylmethionine decarboxylase proenzyme (393 aa).

Residues E11 and E14 contribute to the active site. S71 functions as the Schiff-base intermediate with substrate; via pyruvic acid in the catalytic mechanism. S71 bears the Pyruvic acid (Ser); by autocatalysis mark. The Proton donor; for catalytic activity role is filled by C85. Active-site proton acceptor; for processing activity residues include S236 and H249.

The protein belongs to the eukaryotic AdoMetDC family. Pyruvate is required as a cofactor. Is synthesized initially as an inactive proenzyme. Formation of the active enzyme involves a self-maturation process in which the active site pyruvoyl group is generated from an internal serine residue via an autocatalytic post-translational modification. Two non-identical subunits are generated from the proenzyme in this reaction, and the pyruvate is formed at the N-terminus of the alpha chain, which is derived from the carboxyl end of the proenzyme. The post-translation cleavage follows an unusual pathway, termed non-hydrolytic serinolysis, in which the side chain hydroxyl group of the serine supplies its oxygen atom to form the C-terminus of the beta chain, while the remainder of the serine residue undergoes an oxidative deamination to produce ammonia and the pyruvoyl group blocking the N-terminus of the alpha chain.

It carries out the reaction S-adenosyl-L-methionine + H(+) = S-adenosyl 3-(methylsulfanyl)propylamine + CO2. The protein operates within amine and polyamine biosynthesis; S-adenosylmethioninamine biosynthesis; S-adenosylmethioninamine from S-adenosyl-L-methionine: step 1/1. The chain is S-adenosylmethionine decarboxylase proenzyme (SAMDC) from Hordeum chilense (Barley).